The following is a 71-amino-acid chain: Biotinylated protein TB7.3 homolog (71 aa).

Positions 2–71 constitute a Biotinyl-binding domain; that stretch reads AEDVRAEIVA…QAGDLIAVIS (70 aa). Lys-37 bears the N6-biotinyllysine mark.

The protein is Biotinylated protein TB7.3 homolog of Mycobacterium leprae (strain TN).